Here is a 226-residue protein sequence, read N- to C-terminus: Phosphoribosylformylglycinamidine synthase subunit PurQ (226 aa).

A Glutamine amidotransferase type-1 domain is found at 4–226; it reads RIGVVTFPGS…TSILKKLVNA (223 aa). The Nucleophile role is filled by C87. Active-site residues include H196 and E198.

In terms of assembly, part of the FGAM synthase complex composed of 1 PurL, 1 PurQ and 2 PurS subunits.

The protein resides in the cytoplasm. The enzyme catalyses N(2)-formyl-N(1)-(5-phospho-beta-D-ribosyl)glycinamide + L-glutamine + ATP + H2O = 2-formamido-N(1)-(5-O-phospho-beta-D-ribosyl)acetamidine + L-glutamate + ADP + phosphate + H(+). It carries out the reaction L-glutamine + H2O = L-glutamate + NH4(+). The protein operates within purine metabolism; IMP biosynthesis via de novo pathway; 5-amino-1-(5-phospho-D-ribosyl)imidazole from N(2)-formyl-N(1)-(5-phospho-D-ribosyl)glycinamide: step 1/2. Functionally, part of the phosphoribosylformylglycinamidine synthase complex involved in the purines biosynthetic pathway. Catalyzes the ATP-dependent conversion of formylglycinamide ribonucleotide (FGAR) and glutamine to yield formylglycinamidine ribonucleotide (FGAM) and glutamate. The FGAM synthase complex is composed of three subunits. PurQ produces an ammonia molecule by converting glutamine to glutamate. PurL transfers the ammonia molecule to FGAR to form FGAM in an ATP-dependent manner. PurS interacts with PurQ and PurL and is thought to assist in the transfer of the ammonia molecule from PurQ to PurL. In Streptomyces coelicolor (strain ATCC BAA-471 / A3(2) / M145), this protein is Phosphoribosylformylglycinamidine synthase subunit PurQ.